Reading from the N-terminus, the 688-residue chain is Elongation factor G (688 aa).

One can recognise a tr-type G domain in the interval 8-282; it reads DKFRNFGIMA…GVVDYLPSPL (275 aa). GTP contacts are provided by residues 17–24, 81–85, and 135–138; these read AHIDAGKT, DTPGH, and NKMD.

This sequence belongs to the TRAFAC class translation factor GTPase superfamily. Classic translation factor GTPase family. EF-G/EF-2 subfamily.

The protein resides in the cytoplasm. Functionally, catalyzes the GTP-dependent ribosomal translocation step during translation elongation. During this step, the ribosome changes from the pre-translocational (PRE) to the post-translocational (POST) state as the newly formed A-site-bound peptidyl-tRNA and P-site-bound deacylated tRNA move to the P and E sites, respectively. Catalyzes the coordinated movement of the two tRNA molecules, the mRNA and conformational changes in the ribosome. This is Elongation factor G from Clostridium beijerinckii (strain ATCC 51743 / NCIMB 8052) (Clostridium acetobutylicum).